The sequence spans 165 residues: Fibrinogen-binding protein (165 aa).

The first 29 residues, 1 to 29 (MKNKLIAKSLLTLAAIGITTTTIASTADA), serve as a signal peptide directing secretion.

In terms of assembly, interacts with host fibrinogen alpha chain/FGA. Interacts with host complement protein C3.

Its subcellular location is the secreted. Its function is as follows. Extracellular fibrinogen-binding protein that plays an important role in virulence. By interacting with the alpha chain of fibrinogen and its derivative fibrin, enhances a non-functional interaction between fibrinogen and platelets and is responsible for repression of fibrinogen-dependent platelet aggregation. In addition, assembles a fibrinogen protective shield around the bacteria which results in impaired phagocytic clearance by the host. Mechanistically, interacts with host complement C3b deposited on the surface of the bacterium via its C-terminal and then recruits fibrinogen via its N-terminal. The sequence is that of Fibrinogen-binding protein (fib) from Staphylococcus aureus (strain Newman).